The sequence spans 465 residues: 3-isopropylmalate dehydratase large subunit (465 aa).

[4Fe-4S] cluster is bound by residues cysteine 347, cysteine 407, and cysteine 410.

It belongs to the aconitase/IPM isomerase family. LeuC type 1 subfamily. Heterodimer of LeuC and LeuD. [4Fe-4S] cluster serves as cofactor.

It carries out the reaction (2R,3S)-3-isopropylmalate = (2S)-2-isopropylmalate. It functions in the pathway amino-acid biosynthesis; L-leucine biosynthesis; L-leucine from 3-methyl-2-oxobutanoate: step 2/4. In terms of biological role, catalyzes the isomerization between 2-isopropylmalate and 3-isopropylmalate, via the formation of 2-isopropylmaleate. In Aeromonas salmonicida (strain A449), this protein is 3-isopropylmalate dehydratase large subunit.